We begin with the raw amino-acid sequence, 254 residues long: Type III pantothenate kinase (254 aa).

6-13 (DVGNTNTV) lines the ATP pocket. Residues Tyr100 and 107–110 (GADR) contribute to the substrate site. Asp109 serves as the catalytic Proton acceptor. Asp129 is a binding site for K(+). Thr132 is an ATP binding site. Substrate is bound at residue Thr184.

Belongs to the type III pantothenate kinase family. In terms of assembly, homodimer. Requires NH4(+) as cofactor. The cofactor is K(+).

It is found in the cytoplasm. The enzyme catalyses (R)-pantothenate + ATP = (R)-4'-phosphopantothenate + ADP + H(+). Its pathway is cofactor biosynthesis; coenzyme A biosynthesis; CoA from (R)-pantothenate: step 1/5. Functionally, catalyzes the phosphorylation of pantothenate (Pan), the first step in CoA biosynthesis. The polypeptide is Type III pantothenate kinase (Syntrophus aciditrophicus (strain SB)).